A 239-amino-acid chain; its full sequence is RNA polymerase sigma factor FliA (239 aa).

A sigma-70 factor domain-2 region spans residues 16–88 (LWQRYVPLVR…MLDELRSRDW (73 aa)). Positions 43 to 46 (DLLQ) match the Interaction with polymerase core subunit RpoC motif. The tract at residues 96-166 (NAREVAQAIG…IELVTDDHQR (71 aa)) is sigma-70 factor domain-3. Residues 185–233 (AIETLPEREKLVLTLYYQEELNLKEIGAVLEVGESRVSQLHSQAIKRLR) form a sigma-70 factor domain-4 region. The H-T-H motif DNA-binding region spans 207–226 (LKEIGAVLEVGESRVSQLHS).

It belongs to the sigma-70 factor family. FliA subfamily.

It localises to the cytoplasm. Functionally, sigma factors are initiation factors that promote the attachment of RNA polymerase to specific initiation sites and are then released. This sigma factor controls the expression of flagella-related genes. The polypeptide is RNA polymerase sigma factor FliA (Escherichia coli O157:H7).